A 668-amino-acid chain; its full sequence is ATP-dependent RNA helicase MSS116, mitochondrial (668 aa).

The transit peptide at 1 to 38 (MLKQLSRSLGIRSSPIVANLIRSKQVCTRGFHISLVKQ) directs the protein to the mitochondrion. Residues 87–115 (DFKGKGYIHDSIINSLHKNDFKELTPIQQ) carry the Q motif motif. In terms of domain architecture, Helicase ATP-binding spans 119 to 300 (VPIFNTEKGL…KKHIHPEYEF (182 aa)). 132–139 (AKTGTGKT) contributes to the ATP binding site. Positions 242-245 (DEAD) match the DEAD box motif. Residues 332-501 (SLSELHGIMK…NIIDQIESPL (170 aa)) form the Helicase C-terminal domain. The tract at residues 585–668 (YSDFSRSGMS…EHRRIRDHDE (84 aa)) is disordered. Residues 586 to 597 (SDFSRSGMSQRP) are compositionally biased toward polar residues. Positions 609-636 (NGRGKYGNNRNNDWSYQNKNRYNNNNNR) are enriched in low complexity. The segment covering 637–668 (QTERSYDSDRKSHNDWKYEKKFEHRRIRDHDE) has biased composition (basic and acidic residues).

The protein belongs to the DEAD box helicase family. DDX18/HAS1 subfamily.

The protein resides in the mitochondrion matrix. It carries out the reaction ATP + H2O = ADP + phosphate + H(+). In terms of biological role, ATP-dependent RNA helicase required for mitochondrial splicing of group I and II introns. Also required for efficient mitochondrial translation. In Candida albicans (strain SC5314 / ATCC MYA-2876) (Yeast), this protein is ATP-dependent RNA helicase MSS116, mitochondrial (MSS116).